We begin with the raw amino-acid sequence, 549 residues long: Arginine--tRNA ligase (549 aa).

A 'HIGH' region motif is present at residues 132–142; it reads ANPTGPLHLAH.

The protein belongs to the class-I aminoacyl-tRNA synthetase family. In terms of assembly, monomer.

It localises to the cytoplasm. The enzyme catalyses tRNA(Arg) + L-arginine + ATP = L-arginyl-tRNA(Arg) + AMP + diphosphate. This chain is Arginine--tRNA ligase, found in Renibacterium salmoninarum (strain ATCC 33209 / DSM 20767 / JCM 11484 / NBRC 15589 / NCIMB 2235).